Reading from the N-terminus, the 706-residue chain is Zinc finger CCCH domain-containing protein 56 (706 aa).

ANK repeat units follow at residues 83-113 (EQRTPLMVASLYGSLDVVKFILSFPEAELNL) and 118-150 (DKSTALHCAASGASVNSLDVVKLLLSVGADPNI). The segment covering 211–221 (SSLLSLDSVSS) has biased composition (low complexity). The interval 211–235 (SSLLSLDSVSSPTKPHGTDVTFASE) is disordered. C3H1-type zinc fingers lie at residues 302-324 (PCPDFKKGSCKQGDMCEYAHGVF) and 332-356 (QYRTRLCKDGMGCNRRVCFFAHANE). 3 disordered regions span residues 396 to 427 (PSAAQHSFTPPISPSGNGSMPHSSMGWPQQNI), 545 to 616 (SPKN…QTHG), and 652 to 692 (QMLK…TRES). Polar residues-rich tracts occupy residues 397–427 (SAAQHSFTPPISPSGNGSMPHSSMGWPQQNI) and 545–560 (SPKNVEQHSLLQQASS). Ser568 is subject to Phosphoserine. The segment covering 580–592 (SRSLSSRDFGSSL) has biased composition (low complexity). 3 stretches are compositionally biased toward polar residues: residues 600 to 616 (DSGSPLSPWSSWDQTHG), 652 to 667 (QMLKDSSSPRNGNRVV), and 677 to 686 (QGGSSVNPHN).

The polypeptide is Zinc finger CCCH domain-containing protein 56 (Arabidopsis thaliana (Mouse-ear cress)).